The sequence spans 1225 residues: Chromosome-associated kinesin KIF4 (1225 aa).

Residues 9–338 (IPVRVVRCRP…LRYADRARKI (330 aa)) enclose the Kinesin motor domain. 88 to 95 (GQTGSGKT) is an ATP binding site. Residues 352 to 1003 (ELNHLKQQVQ…LKQKMLLVQV (652 aa)) adopt a coiled-coil conformation. 3 disordered regions span residues 498–520 (QDAAGEAETGQVTKRSSDDFTTQ), 717–744 (NKRLKDALQKQREAADKRKESQNRGMEG), and 1006–1047 (GQKL…PTPE). Polar residues predominate over residues 507–520 (GQVTKRSSDDFTTQ). Positions 719-738 (RLKDALQKQREAADKRKESQ) are enriched in basic and acidic residues. The tract at residues 1004-1225 (ASGQKLRRDQ…GCTPIKEEID (222 aa)) is globular.

Belongs to the TRAFAC class myosin-kinesin ATPase superfamily. Kinesin family. Chromokinesin subfamily. It depends on [2Fe-2S] cluster as a cofactor. The cofactor is [4Fe-4S] cluster. In terms of tissue distribution, expressed in proliferating cells; neuroepithelium of embryos.

The protein resides in the nucleus. It is found in the chromosome. It localises to the cytoplasm. The protein localises to the cytoskeleton. In terms of biological role, iron-sulfur (Fe-S) cluster binding motor protein that has a role in chromosome segregation during mitosis. Required for mitotic chromosomal positioning and bipolar spindle stabilization. The sequence is that of Chromosome-associated kinesin KIF4 (KIF4) from Gallus gallus (Chicken).